Here is a 357-residue protein sequence, read N- to C-terminus: tRNA N6-adenosine threonylcarbamoyltransferase (357 aa).

Residues His119 and His123 each contribute to the Fe cation site. Substrate-binding positions include 141-145, Asp174, Gly187, and Asn284; that span reads LISGG. Asp312 serves as a coordination point for Fe cation.

This sequence belongs to the KAE1 / TsaD family. Fe(2+) is required as a cofactor.

Its subcellular location is the cytoplasm. The catalysed reaction is L-threonylcarbamoyladenylate + adenosine(37) in tRNA = N(6)-L-threonylcarbamoyladenosine(37) in tRNA + AMP + H(+). In terms of biological role, required for the formation of a threonylcarbamoyl group on adenosine at position 37 (t(6)A37) in tRNAs that read codons beginning with adenine. Is involved in the transfer of the threonylcarbamoyl moiety of threonylcarbamoyl-AMP (TC-AMP) to the N6 group of A37, together with TsaE and TsaB. TsaD likely plays a direct catalytic role in this reaction. The protein is tRNA N6-adenosine threonylcarbamoyltransferase of Pelagibacter ubique (strain HTCC1062).